The sequence spans 183 residues: Putative lipoprotein LpqE (183 aa).

Positions 1-30 are cleaved as a signal peptide; the sequence is MSRFKISLPALATRVAVLGFLTLMASVLGG. Residue cysteine 31 is the site of N-palmitoyl cysteine attachment. Residue cysteine 31 is the site of S-diacylglycerol cysteine attachment.

It localises to the cell membrane. In Mycobacterium leprae (strain TN), this protein is Putative lipoprotein LpqE (lpqE).